The primary structure comprises 142 residues: Extracellular globin-1 (142 aa).

Residues 1–142 enclose the Globin domain; the sequence is ECLVTEGLKV…DQIIDGIKDI (142 aa). A disulfide bridge links Cys2 with Cys131. A heme b-binding site is contributed by His94.

Belongs to the globin family. In terms of assembly, the extracellular hemoglobin of the earthworm consists of 12 subunits that have a hexagonal bilayer structure with a molecular weight near 3.8 million. Each one-twelfth subunit is composed primarily of disulfide linked trimers (chains A, B, and C) and monomers (chain D).

The sequence is that of Extracellular globin-1 from Lumbricus terrestris (Common earthworm).